A 359-amino-acid polypeptide reads, in one-letter code: 3-dehydroquinate synthase (359 aa).

NAD(+) is bound by residues 71–76, 105–109, 129–130, Lys-142, Lys-151, and 169–172; these read DGEQYK, GVIGD, TT, and CLST. Zn(2+) is bound by residues Glu-184, His-247, and His-264.

The protein belongs to the sugar phosphate cyclases superfamily. Dehydroquinate synthase family. Co(2+) is required as a cofactor. Zn(2+) serves as cofactor. It depends on NAD(+) as a cofactor.

The protein resides in the cytoplasm. It catalyses the reaction 7-phospho-2-dehydro-3-deoxy-D-arabino-heptonate = 3-dehydroquinate + phosphate. It participates in metabolic intermediate biosynthesis; chorismate biosynthesis; chorismate from D-erythrose 4-phosphate and phosphoenolpyruvate: step 2/7. Functionally, catalyzes the conversion of 3-deoxy-D-arabino-heptulosonate 7-phosphate (DAHP) to dehydroquinate (DHQ). The chain is 3-dehydroquinate synthase from Shewanella pealeana (strain ATCC 700345 / ANG-SQ1).